Here is a 276-residue protein sequence, read N- to C-terminus: Large ribosomal subunit protein uL2 (276 aa).

Residues 221 to 276 are disordered; that stretch reads RGSAMNPNDHPHGGGEGRAPIGRKSPMTPWGKKARGVKTRDRKKASNALIIRRRTK. A compositionally biased stretch (basic residues) spans 252–276; sequence KKARGVKTRDRKKASNALIIRRRTK.

The protein belongs to the universal ribosomal protein uL2 family. Part of the 50S ribosomal subunit. Forms a bridge to the 30S subunit in the 70S ribosome.

Its function is as follows. One of the primary rRNA binding proteins. Required for association of the 30S and 50S subunits to form the 70S ribosome, for tRNA binding and peptide bond formation. It has been suggested to have peptidyltransferase activity; this is somewhat controversial. Makes several contacts with the 16S rRNA in the 70S ribosome. This Aster yellows phytoplasma protein is Large ribosomal subunit protein uL2.